The following is a 95-amino-acid chain: Homeotic protein bicoid (95 aa).

Disordered regions lie at residues 1 to 29 (NLEPLKSHTVVGLDKSCDDGSSDDMSTGM) and 42 to 63 (GKPSAAQAQPQPPPPPLGMMHD).

This sequence belongs to the paired homeobox family. Bicoid subfamily.

Its subcellular location is the nucleus. Functionally, bicoid is polarity protein that provides positional cues for the development of head and thoracic segments. BCD regulates the expression of zygotic genes, possibly through its homeodomain, and inhibits the activity of other maternal gene products. In Drosophila subobscura (Fruit fly), this protein is Homeotic protein bicoid (bcd).